A 180-amino-acid polypeptide reads, in one-letter code: Cytidylate kinase (180 aa).

7-15 (GLPGSGTTT) contacts ATP.

This sequence belongs to the cytidylate kinase family. Type 2 subfamily.

It is found in the cytoplasm. The enzyme catalyses CMP + ATP = CDP + ADP. The catalysed reaction is dCMP + ATP = dCDP + ADP. This chain is Cytidylate kinase, found in Methanosarcina barkeri (strain Fusaro / DSM 804).